Here is a 344-residue protein sequence, read N- to C-terminus: Probable Delta(7)-sterol 5(6)-desaturase (344 aa).

A run of 3 helical transmembrane segments spans residues 76 to 96 (LSLFLILWLFGLVTYYVFASL), 123 to 143 (QTNAALPVMAFFTFPFLVAEV), and 160 to 180 (WYDFFQFPLFIMFTDFGIYWI). Residues 167 to 292 (PLFIMFTDFG…FTTLWDRLGG (126 aa)) form the Fatty acid hydroxylase domain. The Histidine box-1 motif lies at 181–185 (HRGLH). Positions 194–198 (HKPHH) match the Histidine box-2 motif. Residues 224–244 (HIFPFIFPLQKMAYVGLFVFI) traverse the membrane as a helical segment. A Histidine box-3 motif is present at residues 269-273 (HSVHH).

Belongs to the sterol desaturase family. Fe cation serves as cofactor.

It is found in the endoplasmic reticulum membrane. It carries out the reaction a Delta(7)-sterol + 2 Fe(II)-[cytochrome b5] + O2 + 2 H(+) = a Delta(5),Delta(7)-sterol + 2 Fe(III)-[cytochrome b5] + 2 H2O. It functions in the pathway steroid metabolism; ergosterol biosynthesis; ergosterol from zymosterol: step 3/5. Catalyzes the introduction of a C-5 double bond in the B ring of ergosterol. May contribute to the regulation of ergosterol biosynthesis. The sequence is that of Probable Delta(7)-sterol 5(6)-desaturase from Neurospora crassa (strain ATCC 24698 / 74-OR23-1A / CBS 708.71 / DSM 1257 / FGSC 987).